The sequence spans 418 residues: NADH-quinone oxidoreductase subunit D (418 aa).

It belongs to the complex I 49 kDa subunit family. As to quaternary structure, NDH-1 is composed of 14 different subunits. Subunits NuoB, C, D, E, F, and G constitute the peripheral sector of the complex.

It is found in the cell inner membrane. The catalysed reaction is a quinone + NADH + 5 H(+)(in) = a quinol + NAD(+) + 4 H(+)(out). In terms of biological role, NDH-1 shuttles electrons from NADH, via FMN and iron-sulfur (Fe-S) centers, to quinones in the respiratory chain. The immediate electron acceptor for the enzyme in this species is believed to be ubiquinone. Couples the redox reaction to proton translocation (for every two electrons transferred, four hydrogen ions are translocated across the cytoplasmic membrane), and thus conserves the redox energy in a proton gradient. The protein is NADH-quinone oxidoreductase subunit D of Neisseria meningitidis serogroup C (strain 053442).